The chain runs to 130 residues: NADH-quinone oxidoreductase subunit A (130 aa).

The next 3 helical transmembrane spans lie at 15–35, 67–87, and 95–115; these read AIHV…ATII, FLIA…FAWA, and WVGL…LIYL.

Belongs to the complex I subunit 3 family. In terms of assembly, NDH-1 is composed of 14 different subunits. Subunits NuoA, H, J, K, L, M, N constitute the membrane sector of the complex.

The protein resides in the cell inner membrane. The enzyme catalyses a quinone + NADH + 5 H(+)(in) = a quinol + NAD(+) + 4 H(+)(out). Functionally, NDH-1 shuttles electrons from NADH, via FMN and iron-sulfur (Fe-S) centers, to quinones in the respiratory chain. The immediate electron acceptor for the enzyme in this species is believed to be ubiquinone. Couples the redox reaction to proton translocation (for every two electrons transferred, four hydrogen ions are translocated across the cytoplasmic membrane), and thus conserves the redox energy in a proton gradient. This is NADH-quinone oxidoreductase subunit A from Rhodopseudomonas palustris (strain BisA53).